We begin with the raw amino-acid sequence, 376 residues long: N-acetyldiaminopimelate deacetylase (376 aa).

Residue Asp-69 is part of the active site. The active-site Proton acceptor is Glu-127.

It belongs to the peptidase M20A family. N-acetyldiaminopimelate deacetylase subfamily.

The catalysed reaction is N-acetyl-(2S,6S)-2,6-diaminopimelate + H2O = (2S,6S)-2,6-diaminopimelate + acetate. It participates in amino-acid biosynthesis; L-lysine biosynthesis via DAP pathway; LL-2,6-diaminopimelate from (S)-tetrahydrodipicolinate (acetylase route): step 3/3. In terms of biological role, catalyzes the conversion of N-acetyl-diaminopimelate to diaminopimelate and acetate. This chain is N-acetyldiaminopimelate deacetylase, found in Lactococcus lactis subsp. cremoris (strain SK11).